The chain runs to 388 residues: (S)-8-oxocitronellyl enol synthase ISY1 (388 aa).

NADP(+) is bound by residues 35–37 (TGI), 63–64 (RR), 81–82 (DV), 105–106 (TW), and Q143. Catalysis depends on residues K147 and Y178. NADP(+) contacts are provided by residues Y178, I205, and 212–214 (SMM).

The protein belongs to the short-chain dehydrogenases/reductases (SDR) family.

It carries out the reaction (S)-8-oxocitronellyl enol + NADP(+) = (6E)-8-oxogeranial + NADPH + H(+). It catalyses the reaction (S)-8-oxocitronellyl enol + NAD(+) = (6E)-8-oxogeranial + NADH + H(+). Iridoid synthase that catalyzes the first step in generation of the iridoid ring scaffold using the linear monoterpene (6E)-8-oxogeranial as substrate. Iridoids comprise a large family of distinctive bicyclic monoterpenes that possess a wide range of pharmacological activities, including anticancer, anti-inflammatory, antifungal and antibacterial activities. Catalyzes the conversion of the linear monoterpene (6E)-8-oxogeranial to (S)-8-oxocitronellyl enol, a precursor of nepetalactones, which are metabolites that are both insect-repellent and have euphoric effect in cats. The chain is (S)-8-oxocitronellyl enol synthase ISY1 from Nepeta racemosa (Catmint).